A 392-amino-acid chain; its full sequence is Cytochrome b (392 aa).

The next 4 helical transmembrane spans lie at 38–58 (FGSL…FLAM), 82–104 (WLLR…LHIF), 119–139 (VRCL…TGYV), and 185–205 (FFSL…LHLA). 2 residues coordinate heme b: H88 and H102. Heme b-binding residues include H189 and H203. An a ubiquinone-binding site is contributed by H208. 4 helical membrane passes run 231–251 (FYVK…IWIF), 295–315 (SGGV…PFFK), 327–347 (IHQG…WIGC), and 354–373 (FVTI…AITP).

Belongs to the cytochrome b family. In terms of assembly, the main subunits of complex b-c1 are: cytochrome b, cytochrome c1 and the Rieske protein. It depends on heme b as a cofactor.

The protein resides in the mitochondrion inner membrane. Component of the ubiquinol-cytochrome c reductase complex (complex III or cytochrome b-c1 complex) that is part of the mitochondrial respiratory chain. The b-c1 complex mediates electron transfer from ubiquinol to cytochrome c. Contributes to the generation of a proton gradient across the mitochondrial membrane that is then used for ATP synthesis. The protein is Cytochrome b (MT-CYB) of Pisum sativum (Garden pea).